A 611-amino-acid polypeptide reads, in one-letter code: Probable methyltransferase PMT1 (611 aa).

Topologically, residues 1 to 11 are cytoplasmic; sequence MRGRSEGGKKK. A helical; Signal-anchor for type II membrane protein membrane pass occupies residues 12-32; sequence PVIVLLCVASVVLVFVYLFFG. Over 33 to 611 the chain is Lumenal; sequence SSNHKAIEYG…LTSESLRDLE (579 aa). Asn345 carries N-linked (GlcNAc...) asparagine glycosylation.

It belongs to the methyltransferase superfamily.

The protein resides in the golgi apparatus membrane. The protein is Probable methyltransferase PMT1 of Arabidopsis thaliana (Mouse-ear cress).